Consider the following 215-residue polypeptide: FGFR1 oncogene partner 2 homolog (215 aa).

The stretch at Leu35–Ser183 forms a coiled coil.

Belongs to the SIKE family.

It localises to the cytoplasm. The polypeptide is FGFR1 oncogene partner 2 homolog (fgfr1op2) (Danio rerio (Zebrafish)).